Reading from the N-terminus, the 331-residue chain is ADP-L-glycero-D-manno-heptose-6-epimerase (331 aa).

Residues 11–12 (FI), 32–33 (DN), lysine 39, lysine 54, 75–79 (EGACS), and asparagine 92 contribute to the NADP(+) site. Catalysis depends on tyrosine 139, which acts as the Proton acceptor. Residue lysine 143 coordinates NADP(+). Residue asparagine 168 coordinates substrate. Valine 169 and lysine 177 together coordinate NADP(+). Lysine 177 serves as the catalytic Proton acceptor. Substrate-binding positions include arginine 179, histidine 186, 200–203 (FGEY), arginine 213, and tyrosine 292.

This sequence belongs to the NAD(P)-dependent epimerase/dehydratase family. HldD subfamily. Homopentamer. NADP(+) serves as cofactor.

It carries out the reaction ADP-D-glycero-beta-D-manno-heptose = ADP-L-glycero-beta-D-manno-heptose. Its pathway is nucleotide-sugar biosynthesis; ADP-L-glycero-beta-D-manno-heptose biosynthesis; ADP-L-glycero-beta-D-manno-heptose from D-glycero-beta-D-manno-heptose 7-phosphate: step 4/4. Functionally, catalyzes the interconversion between ADP-D-glycero-beta-D-manno-heptose and ADP-L-glycero-beta-D-manno-heptose via an epimerization at carbon 6 of the heptose. This chain is ADP-L-glycero-D-manno-heptose-6-epimerase, found in Ralstonia nicotianae (strain ATCC BAA-1114 / GMI1000) (Ralstonia solanacearum).